Consider the following 166-residue polypeptide: C-signal (166 aa).

In terms of processing, the mature C-signal (p17) is derived from the precursor sequence (p25) by proteolytic cleavage. The subtilisin-like protease PopC is directly responsible for cleavage of p25 to p17. The cleavage site is probably located between amino acid residues 60 and 68 in p25.

The protein resides in the secreted. It localises to the cell outer membrane. With respect to regulation, synthesized as a precursor protein (p25), which is cleaved after secretion to generate the mature active C-signal (p17). The p25 precursor purified from M.xanthus cells does not display C-signal activity. Its function is as follows. Cell-cell signaling protein required for fruiting body formation, a multicellular developmental program that is induced in response to starvation. Necessary for rippling, cellular aggregation, spore differentiation and for gene expression that is initiated after 6 hours of starvation. In starving cells, the C-signal directly induces aggregation and sporulation, which are induced at distinct threshold levels of C-signaling. Contact with C-signaling induces cells to glide with high speed and low stop and reversal frequencies toward aggregation centers. The C-signal acts as a morphogen and induces distinct events at distinct threshold levels. A regulated increase in the level of C-signaling during development ensures the correct temporal order of aggregation and sporulation. This Myxococcus xanthus protein is C-signal.